Here is a 505-residue protein sequence, read N- to C-terminus: Aminoaldehyde dehydrogenase 1a (505 aa).

D101 provides a ligand contact to Na(+). Residues 161–163 (TPW) and 187–190 (KPSE) contribute to the NAD(+) site. Residue L191 coordinates Na(+). NAD(+)-binding positions include 241 to 244 (SFET) and E262. Catalysis depends on E262, which acts as the Proton acceptor. C296 functions as the Nucleophile in the catalytic mechanism. Positions 395 and 461 each coordinate NAD(+).

The protein belongs to the aldehyde dehydrogenase family. In terms of assembly, forms homodimers.

The catalysed reaction is 4-aminobutanal + NAD(+) + H2O = 4-aminobutanoate + NADH + 2 H(+). It catalyses the reaction 3-aminopropanal + NAD(+) + H2O = beta-alanine + NADH + 2 H(+). It carries out the reaction 4-(trimethylamino)butanal + NAD(+) + H2O = 4-(trimethylamino)butanoate + NADH + 2 H(+). The enzyme catalyses 4-guanidinobutanal + NAD(+) + H2O = 4-guanidinobutanoate + NADH + 2 H(+). The catalysed reaction is betaine aldehyde + NAD(+) + H2O = glycine betaine + NADH + 2 H(+). The protein operates within amine and polyamine biosynthesis; betaine biosynthesis via choline pathway; betaine from betaine aldehyde: step 1/1. Dehydrogenase that catalyzes the oxidation of several aminoaldehydes. Metabolizes and detoxifies aldehyde products of polyamine degradation to non-toxic amino acids. Catalyzes the oxidation of 4-aminobutanal and 3-aminopropanal to 4-aminobutanoate and beta-alanine, respectively. Catalyzes the oxidation of 4-(trimethylamino)butanal and 4-guanidinobutanal to 4-trimethylammoniobutanoate and 4-guanidinobutanoate, respectively. Catalyzes the oxidation of betaine aldehyde to glycine betaine. In terms of biological role, dehydrogenase that catalyzes the oxidation of several aminoaldehydes. Catalyzes the oxidation of betaine aldehyde to glycine betaine. Catalyzes the oxidation of 4-(trimethylamino)butanal to 4-trimethylammoniobutanoate. This Zea mays (Maize) protein is Aminoaldehyde dehydrogenase 1a.